The following is a 1352-amino-acid chain: DNA-directed RNA polymerase subunit beta (1352 aa).

This sequence belongs to the RNA polymerase beta chain family. As to quaternary structure, the RNAP catalytic core consists of 2 alpha, 1 beta, 1 beta' and 1 omega subunit. When a sigma factor is associated with the core the holoenzyme is formed, which can initiate transcription.

It catalyses the reaction RNA(n) + a ribonucleoside 5'-triphosphate = RNA(n+1) + diphosphate. DNA-dependent RNA polymerase catalyzes the transcription of DNA into RNA using the four ribonucleoside triphosphates as substrates. The polypeptide is DNA-directed RNA polymerase subunit beta (Hydrogenovibrio crunogenus (strain DSM 25203 / XCL-2) (Thiomicrospira crunogena)).